An 870-amino-acid chain; its full sequence is MADDTDNPPNIQIPAKSYGFPPEAFDPRRLPDYDTNFLPAHDLEAFIQALAAPDFVQSPDDASSMRLNSPGLHSPSSLDITKDDYDHSEARAALASVADVAAPGGGNNHHRRTSTGTFFSAHNDWAPVSEKVIKTDRDEKRNKRGKDRKNKKPRKGVAPLRTLVGTRSKDETREGYLYSLLKWPFLLFVSFWIVGLGMAYLATRFYIYFYEQFVAWRGRREQLRRAMRATGNYKDWVAAARNMDDFFGNQRWKEENDFAYYDSKTVRRVWDQMRRCREKAEEVERELESQSQNSDSGVASGEETSNTKAGGGNNGNDKKTQPVEDLKALIEACVKNNFVGIENPRLYSQTYYGTKNLVQNYVDEVERSIKFLIDTKQLTKEQKRVMFKGICANYGRTALCLSGGATFAYYHFGVVKALLEVDYLPDIITGTSGGALVAALVATRTNDELKELLNPALAHKITACRESFTVWFWRWWKTGARFDSVDWAKQCAWWCHGSLTFREAYERTGRILNVSCVPSDPHSPTILCNYLTSPDCVIWSAVLASAAVPGILNPVVLMMKNRDGSLEPYSFGHKWKDGSLRTDIPIKSLNLHFNVNFSIVSQVNPHINLFFFSSRGSVGQPVTHRKGRGWRGGYLGSATEQYIKLDLTKWLRVLRQLELLPRPLGQDWSQLWLQTFGGTVTIWPKSIPSDFLKILSDPDPPRLARMIHEGQQSAFPKVKFIANRLKIERLVERGRRETRDRRNAANAFTATGDGEGSYASHSIVDAMGGKHPLAPSSSGGAGDRRGSIESILSEDDLRSLLIKGREGVHTSGGSSTGTEDELTMTELEGEDDDGGTSRVSEGGSRNRYFEGALEEEDGALEVAASDHSRT.

Disordered stretches follow at residues 1 to 24 and 131 to 158; these read MADDTDNPPNIQIPAKSYGFPPEA and KVIKTDRDEKRNKRGKDRKNKKPRKGVA. The span at 131–141 shows a compositional bias: basic and acidic residues; sequence KVIKTDRDEKR. Over residues 142–155 the composition is skewed to basic residues; the sequence is NKRGKDRKNKKPRK. Residues 183 to 203 traverse the membrane as a helical segment; that stretch reads WPFLLFVSFWIVGLGMAYLAT. A disordered region spans residues 281-320; it reads EEVERELESQSQNSDSGVASGEETSNTKAGGGNNGNDKKT. The segment covering 289–308 has biased composition (polar residues); that stretch reads SQSQNSDSGVASGEETSNTK. The PNPLA domain maps to 399 to 590; sequence LCLSGGATFA…RTDIPIKSLN (192 aa). A GXSXG motif is present at residues 430 to 434; it reads GTSGG. S432 functions as the Nucleophile in the catalytic mechanism. Catalysis depends on D577, which acts as the Proton acceptor. 2 disordered regions span residues 735-786 and 804-870; these read RRET…DRRG and GREG…HSRT. Residues 818 to 834 are compositionally biased toward acidic residues; the sequence is TEDELTMTELEGEDDDG.

It belongs to the PLPL family.

Its subcellular location is the membrane. Probable lipid hydrolase. The protein is Patatin-like phospholipase domain-containing protein NCU11180 of Neurospora crassa (strain ATCC 24698 / 74-OR23-1A / CBS 708.71 / DSM 1257 / FGSC 987).